The following is a 197-amino-acid chain: MANYPQLNKEVQQGEIKVVMHTNKGDMTFKLFPNIAPKTVENFVTHAKNGYYDGITFHRVINDFMIQGGDPTATGMGGESIYGGAFEDEFSLNAFNLYGALSMANSGPNTNGSQFFIVQMKEVPQNMLSQLTDGGWPQPIVDAYGEKGGTPWLDQKHTVFGQIIDGETTLEDIANTKVGPQDKPLHDVVIESIDVEE.

The region spanning 14 to 195 (GEIKVVMHTN…HDVVIESIDV (182 aa)) is the PPIase cyclophilin-type domain.

It belongs to the cyclophilin-type PPIase family.

It catalyses the reaction [protein]-peptidylproline (omega=180) = [protein]-peptidylproline (omega=0). Functionally, PPIases accelerate the folding of proteins. It catalyzes the cis-trans isomerization of proline imidic peptide bonds in oligopeptides. The protein is Putative peptidyl-prolyl cis-trans isomerase of Staphylococcus aureus (strain COL).